Reading from the N-terminus, the 630-residue chain is Chaperone protein DnaK (630 aa).

Position 197 is a phosphothreonine; by autocatalysis (Thr197). Polar residues predominate over residues 604-618; it reads KNNESVKNNESVKNN. The disordered stretch occupies residues 604 to 630; that stretch reads KNNESVKNNESVKNNESVKDVDFEEIK. Positions 619–630 are enriched in basic and acidic residues; the sequence is ESVKDVDFEEIK.

It belongs to the heat shock protein 70 family.

Functionally, acts as a chaperone. In Karelsulcia muelleri (strain GWSS) (Sulcia muelleri), this protein is Chaperone protein DnaK.